Reading from the N-terminus, the 932-residue chain is Serotype-specific antigen 1 (932 aa).

The signal sequence occupies residues 1-24; that stretch reads MYKIKHSFNKTLIAISISSFLSIA. The Peptidase S8 domain occupies 25 to 407; it reads YATESIENPQ…WGLINLKKAV (383 aa). Active-site charge relay system residues include Asp-58, His-116, and Ser-351. The Autotransporter domain occupies 669 to 932; that stretch reads HTPLQTTVWA…PIWLESKCWL (264 aa).

It belongs to the peptidase S8 family.

The protein localises to the cell outer membrane. This Mannheimia haemolytica (Pasteurella haemolytica) protein is Serotype-specific antigen 1 (ssa1).